A 407-amino-acid polypeptide reads, in one-letter code: Na(+)-translocating NADH-quinone reductase subunit F (407 aa).

The helical transmembrane segment at 3-23 threads the bilayer; it reads IILGVVMFTLIVLALVLVILF. The 2Fe-2S ferredoxin-type domain maps to 32-126; it reads GDITISVNDD…DMDIELPEEI (95 aa). [2Fe-2S] cluster contacts are provided by Cys-69, Cys-75, Cys-78, and Cys-110. Residues 129 to 269 form the FAD-binding FR-type domain; sequence VKKWECTVIS…SGPFGEFFAK (141 aa). Residues 272–389 form a catalytic region; it reads DAEMVFVGGG…PMMNAAVIGM (118 aa).

It belongs to the NqrF family. As to quaternary structure, composed of six subunits; NqrA, NqrB, NqrC, NqrD, NqrE and NqrF. [2Fe-2S] cluster serves as cofactor. FAD is required as a cofactor.

The protein localises to the cell inner membrane. It catalyses the reaction a ubiquinone + n Na(+)(in) + NADH + H(+) = a ubiquinol + n Na(+)(out) + NAD(+). NQR complex catalyzes the reduction of ubiquinone-1 to ubiquinol by two successive reactions, coupled with the transport of Na(+) ions from the cytoplasm to the periplasm. The first step is catalyzed by NqrF, which accepts electrons from NADH and reduces ubiquinone-1 to ubisemiquinone by a one-electron transfer pathway. The sequence is that of Na(+)-translocating NADH-quinone reductase subunit F from Vibrio campbellii (strain ATCC BAA-1116).